Consider the following 471-residue polypeptide: Ubiquitin carboxyl-terminal hydrolase 8 (471 aa).

Positions 4, 6, 46, 49, 60, 63, 68, 73, 77, 83, 96, and 99 each coordinate Zn(2+). Residues 22–122 (KTCNAARYIL…ILAKYWDDVC (101 aa)) form a UBP-type; degenerate zinc finger. One can recognise a USP domain in the interval 137-468 (SGLINMGSTC…QAYLLFYTIR (332 aa)). C146 acts as the Nucleophile in catalysis. Residues H170, C174, C182, C185, H250, C271, C273, H276, C289, C292, C336, and C339 each contribute to the Zn(2+) site. H427 (proton acceptor) is an active-site residue.

It belongs to the peptidase C19 family. UBP8 subfamily. Component of the 1.8 MDa SAGA (Spt-Ada-Gcn5 acetyltransferase) complex, which is composed of 19 subunits TRA1, SPT7, TAF5, NGG1/ADA3, SGF73, SPT20/ADA5, SPT8, TAF12, TAF6, HFI1/ADA1, UBP8, GCN5, ADA2, SPT3, SGF29, TAF10, TAF9, SGF11 and SUS1. The SAGA complex is composed of 4 modules, namely the HAT (histone acetyltransferase) module (GCN5, ADA2, NGG1/ADA3 and SGF29), the DUB (deubiquitinating) module (UBP8, SGF11, SGF73 and SUS1), the core or TAF (TBP-associated factor) module (TAF5, TAF6, TAF9, TAF10 and TAF12), and the Tra1 or SPT (Suppressor of Ty) module (TRA1, HFI1/ADA1, SPT3, SPT7, SPT8 and SPT20/ADA5). The Tra1/SPT module binds activators, the core module recruits TBP (TATA-binding protein), the HAT module contains the histone H3 acetyltransferase GCN5, and the DUB module comprises the histone H2B deubiquitinase UBP8. Also identified in an altered form of SAGA, named SALSA (SAGA altered, Spt8 absent) or SLIK (SAGA-like) complex, which contains a C-terminal truncated form of SPT7 and is missing SPT8. However, it has been shown that the SAGA and SAGA-like SALSA/SLIK transcriptional coactivators are structurally and biochemically equivalent.

Its subcellular location is the nucleus. The enzyme catalyses Thiol-dependent hydrolysis of ester, thioester, amide, peptide and isopeptide bonds formed by the C-terminal Gly of ubiquitin (a 76-residue protein attached to proteins as an intracellular targeting signal).. Histone deubiquitinating enzyme component of the transcription coactivator SAGA complex. SAGA acts as a general cofactor required for essentially all RNA polymerase II transcription. At the promoters, SAGA is required for transcription pre-initiation complex (PIC) recruitment. It influences RNA polymerase II transcriptional activity through different activities such as TBP interaction (via core/TAF module) and promoter selectivity, interaction with transcription activators (via Tra1/SPT module), and chromatin modification through histone acetylation (via HAT module) and deubiquitination (via DUB module). SAGA preferentially acetylates histones H3 (to form H3K9ac, H3K14ac, H3K18ac and H3K23ac) and H2B and deubiquitinates histone H2B. SAGA interacts with DNA via upstream activating sequences (UASs). Also identified in a modified version of SAGA named SALSA or SLIK. The cleavage of SPT7 and the absence of the SPT8 subunit in SLIK neither drive any major conformational differences in its structure compared with SAGA, nor significantly affect HAT, DUB, or DNA-binding activities. Within the DUB module, the correctly positioned zinc finger domains of SGF11 and SGF73 are both required to fully activate the ubiquitin hydrolase UBP8. The DUB module is also linked to the splicing efficiency of many transcripts. In Saccharomyces cerevisiae (strain ATCC 204508 / S288c) (Baker's yeast), this protein is Ubiquitin carboxyl-terminal hydrolase 8 (UBP8).